A 256-amino-acid chain; its full sequence is Hemolymph lipopolysaccharide-binding protein (256 aa).

Positions 1–21 are cleaved as a signal peptide; it reads MMNTRALLPLSVLLMATLCLC. Positions 22–33 are excised as a propeptide; that stretch reads ELPIPILQRFVR. An N-linked (GlcNAc...) asparagine glycan is attached at asparagine 56. Residues 146–256 enclose the C-type lectin domain; sequence IICQQEGGHL…KLPFVCEVEL (111 aa). 2 disulfide bridges follow: cysteine 148-cysteine 252 and cysteine 230-cysteine 244.

Hemolymph.

It is found in the secreted. Its function is as follows. Participates probably in the elimination of foreign substances invading the insect abdominal cavity, and in trapping intracellular symbionts, when they leak from the mycetomes into the hemolymph. This chain is Hemolymph lipopolysaccharide-binding protein, found in Periplaneta americana (American cockroach).